Here is a 255-residue protein sequence, read N- to C-terminus: Pyridoxine 5'-phosphate synthase (255 aa).

Asn6 lines the 3-amino-2-oxopropyl phosphate pocket. Residue 8 to 9 (DH) participates in 1-deoxy-D-xylulose 5-phosphate binding. Arg17 serves as a coordination point for 3-amino-2-oxopropyl phosphate. His41 serves as the catalytic Proton acceptor. The 1-deoxy-D-xylulose 5-phosphate site is built by Arg43 and His48. Glu68 (proton acceptor) is an active-site residue. Residue Thr96 participates in 1-deoxy-D-xylulose 5-phosphate binding. His208 functions as the Proton donor in the catalytic mechanism. Residues Gly209 and 230-231 (GQ) contribute to the 3-amino-2-oxopropyl phosphate site.

Belongs to the PNP synthase family. Homooctamer; tetramer of dimers.

Its subcellular location is the cytoplasm. The enzyme catalyses 3-amino-2-oxopropyl phosphate + 1-deoxy-D-xylulose 5-phosphate = pyridoxine 5'-phosphate + phosphate + 2 H2O + H(+). It participates in cofactor biosynthesis; pyridoxine 5'-phosphate biosynthesis; pyridoxine 5'-phosphate from D-erythrose 4-phosphate: step 5/5. Its function is as follows. Catalyzes the complicated ring closure reaction between the two acyclic compounds 1-deoxy-D-xylulose-5-phosphate (DXP) and 3-amino-2-oxopropyl phosphate (1-amino-acetone-3-phosphate or AAP) to form pyridoxine 5'-phosphate (PNP) and inorganic phosphate. The polypeptide is Pyridoxine 5'-phosphate synthase (Campylobacter lari (strain RM2100 / D67 / ATCC BAA-1060)).